A 484-amino-acid chain; its full sequence is ATP synthase subunit beta (484 aa).

Position 168–175 (Gly-168–Thr-175) interacts with ATP.

Belongs to the ATPase alpha/beta chains family. In terms of assembly, F-type ATPases have 2 components, CF(1) - the catalytic core - and CF(0) - the membrane proton channel. CF(1) has five subunits: alpha(3), beta(3), gamma(1), delta(1), epsilon(1). CF(0) has three main subunits: a(1), b(2) and c(9-12). The alpha and beta chains form an alternating ring which encloses part of the gamma chain. CF(1) is attached to CF(0) by a central stalk formed by the gamma and epsilon chains, while a peripheral stalk is formed by the delta and b chains.

The protein localises to the cell membrane. The catalysed reaction is ATP + H2O + 4 H(+)(in) = ADP + phosphate + 5 H(+)(out). Functionally, produces ATP from ADP in the presence of a proton gradient across the membrane. The catalytic sites are hosted primarily by the beta subunits. The sequence is that of ATP synthase subunit beta from Pseudarthrobacter chlorophenolicus (strain ATCC 700700 / DSM 12829 / CIP 107037 / JCM 12360 / KCTC 9906 / NCIMB 13794 / A6) (Arthrobacter chlorophenolicus).